Here is a 327-residue protein sequence, read N- to C-terminus: Methionyl-tRNA formyltransferase (327 aa).

111–114 (SLLP) serves as a coordination point for (6S)-5,6,7,8-tetrahydrofolate.

Belongs to the Fmt family.

It catalyses the reaction L-methionyl-tRNA(fMet) + (6R)-10-formyltetrahydrofolate = N-formyl-L-methionyl-tRNA(fMet) + (6S)-5,6,7,8-tetrahydrofolate + H(+). Its function is as follows. Attaches a formyl group to the free amino group of methionyl-tRNA(fMet). The formyl group appears to play a dual role in the initiator identity of N-formylmethionyl-tRNA by promoting its recognition by IF2 and preventing the misappropriation of this tRNA by the elongation apparatus. This Synechococcus elongatus (strain ATCC 33912 / PCC 7942 / FACHB-805) (Anacystis nidulans R2) protein is Methionyl-tRNA formyltransferase.